The sequence spans 493 residues: MTDLTSLTIAEARAKLSAKEITAVELTDAYLGAIEAANETINAYVAVTPEKAREMAKASDARIAAGNAAALEGIPLGIKDLFGTEGIHTQACSHILDGFEPRYESTVTQNLWNDGAVMLGKLNMDEFAMGSSNETSYYGPVKNPWRAKGSNLDLVPGGSSGGSAAAVAARLCAGATATDTGGSIRQPAAFTGTVGIKPTYGRCSRWGVVAFASSLDQAGPIARDVRDAAILLKSMASIDPKDTTSVDLPVPDYEAAIGQSIKGMRIGIPKEYRVDGMPEDIEALWQQGIAWLRDAGAEIVDISLPHTKYALPAYYIVAPAEASSNLARYDGVRYGLRVDGKDIIDMYEKTRAAGFGQEVKRRIMIGTYVLSAGYYDAYYLRAQKVRTLIKRDFELAFQAGVDAILTPATPSSAFGIADEDLASDPVKMYLNDIFTVTVNMAGLPGIAVPGGLDRKGLPLGLQLIGKPFEEETLFKTAHVIEQAAGRFTASKWW.

Catalysis depends on charge relay system residues K79 and S159. Residue S183 is the Acyl-ester intermediate of the active site.

This sequence belongs to the amidase family. GatA subfamily. As to quaternary structure, heterotrimer of A, B and C subunits.

The catalysed reaction is L-glutamyl-tRNA(Gln) + L-glutamine + ATP + H2O = L-glutaminyl-tRNA(Gln) + L-glutamate + ADP + phosphate + H(+). Its function is as follows. Allows the formation of correctly charged Gln-tRNA(Gln) through the transamidation of misacylated Glu-tRNA(Gln) in organisms which lack glutaminyl-tRNA synthetase. The reaction takes place in the presence of glutamine and ATP through an activated gamma-phospho-Glu-tRNA(Gln). This chain is Glutamyl-tRNA(Gln) amidotransferase subunit A, found in Rhizobium meliloti (strain 1021) (Ensifer meliloti).